The chain runs to 283 residues: Coiled-coil domain-containing protein 42 homolog (283 aa).

Coiled-coil stretches lie at residues 31-139 (ATQL…LQRY) and 174-204 (QDLR…HRVS).

It belongs to the CFAP73 family.

The chain is Coiled-coil domain-containing protein 42 homolog from Monosiga brevicollis (Choanoflagellate).